The following is a 257-amino-acid chain: GTP cyclohydrolase FolE2 (257 aa).

This sequence belongs to the GTP cyclohydrolase IV family.

The catalysed reaction is GTP + H2O = 7,8-dihydroneopterin 3'-triphosphate + formate + H(+). It participates in cofactor biosynthesis; 7,8-dihydroneopterin triphosphate biosynthesis; 7,8-dihydroneopterin triphosphate from GTP: step 1/1. Converts GTP to 7,8-dihydroneopterin triphosphate. The chain is GTP cyclohydrolase FolE2 from Kosmotoga olearia (strain ATCC BAA-1733 / DSM 21960 / TBF 19.5.1).